A 310-amino-acid polypeptide reads, in one-letter code: 4-hydroxy-3-methylbut-2-enyl diphosphate reductase (310 aa).

Residue Cys-13 participates in [4Fe-4S] cluster binding. (2E)-4-hydroxy-3-methylbut-2-enyl diphosphate is bound by residues His-42 and His-75. The dimethylallyl diphosphate site is built by His-42 and His-75. Isopentenyl diphosphate contacts are provided by His-42 and His-75. Residue Cys-97 coordinates [4Fe-4S] cluster. Position 125 (His-125) interacts with (2E)-4-hydroxy-3-methylbut-2-enyl diphosphate. Residue His-125 participates in dimethylallyl diphosphate binding. Position 125 (His-125) interacts with isopentenyl diphosphate. Glu-127 serves as the catalytic Proton donor. Residue Thr-165 coordinates (2E)-4-hydroxy-3-methylbut-2-enyl diphosphate. Residue Cys-195 participates in [4Fe-4S] cluster binding. Residues Ser-223, Ser-224, Asn-225, and Ser-267 each coordinate (2E)-4-hydroxy-3-methylbut-2-enyl diphosphate. Dimethylallyl diphosphate-binding residues include Ser-223, Ser-224, Asn-225, and Ser-267. Positions 223, 224, 225, and 267 each coordinate isopentenyl diphosphate.

The protein belongs to the IspH family. [4Fe-4S] cluster serves as cofactor.

The catalysed reaction is isopentenyl diphosphate + 2 oxidized [2Fe-2S]-[ferredoxin] + H2O = (2E)-4-hydroxy-3-methylbut-2-enyl diphosphate + 2 reduced [2Fe-2S]-[ferredoxin] + 2 H(+). The enzyme catalyses dimethylallyl diphosphate + 2 oxidized [2Fe-2S]-[ferredoxin] + H2O = (2E)-4-hydroxy-3-methylbut-2-enyl diphosphate + 2 reduced [2Fe-2S]-[ferredoxin] + 2 H(+). The protein operates within isoprenoid biosynthesis; dimethylallyl diphosphate biosynthesis; dimethylallyl diphosphate from (2E)-4-hydroxy-3-methylbutenyl diphosphate: step 1/1. It functions in the pathway isoprenoid biosynthesis; isopentenyl diphosphate biosynthesis via DXP pathway; isopentenyl diphosphate from 1-deoxy-D-xylulose 5-phosphate: step 6/6. In terms of biological role, catalyzes the conversion of 1-hydroxy-2-methyl-2-(E)-butenyl 4-diphosphate (HMBPP) into a mixture of isopentenyl diphosphate (IPP) and dimethylallyl diphosphate (DMAPP). Acts in the terminal step of the DOXP/MEP pathway for isoprenoid precursor biosynthesis. The sequence is that of 4-hydroxy-3-methylbut-2-enyl diphosphate reductase from Chlamydia pneumoniae (Chlamydophila pneumoniae).